Reading from the N-terminus, the 226-residue chain is Methylamine utilization ferredoxin-type protein MauM (226 aa).

4Fe-4S ferredoxin-type domains lie at 59 to 87, 95 to 127, 136 to 172, and 180 to 211; these read PEPE…LASW, TPYF…PLLT, VAVL…LKQI, and QIPT…LLPR. [4Fe-4S] cluster contacts are provided by C67, C70, C73, C77, C105, C108, C113, C117, C145, C153, C156, C160, C189, C192, C195, and C199.

It participates in one-carbon metabolism; methylamine degradation. In terms of biological role, involved in electron transfer. This Methylophilus methylotrophus (Bacterium W3A1) protein is Methylamine utilization ferredoxin-type protein MauM (mauM).